The primary structure comprises 889 residues: Disease resistance protein RPS5 (889 aa).

Residue Gly2 is the site of N-myristoyl glycine attachment. Cys4 is lipidated: S-palmitoyl cysteine. The stretch at 29-58 (IHNLSKNLASLQKAMRMLKARQYDVIRRLE) forms a coiled coil. Residues 140–444 (SEATPFADVD…SEGFINEKEG (305 aa)) form the NB-ARC domain. Residue 183 to 190 (GMGGVGKT) participates in ATP binding. 6 LRR repeats span residues 518 to 539 (TVRKISLMNNEIEEIFDSHECA), 540 to 561 (ALTTLFLQKNDVVKISAEFFRC), 564 to 586 (HLVVLDLSENQSLNELPEEISEL), 588 to 610 (SLRYFNLSYTCIHQLPVGLWTLK), 611 to 633 (KLIHLNLEHMSSLGSILGISNLW), and 634 to 656 (NLRTLGLRDSRLLLDMSLVKELQ).

This sequence belongs to the disease resistance NB-LRR family. In uninfected plants, interacts with PBS1 through the coiled coil domain. Homodimer.

The protein resides in the cell membrane. Functionally, disease resistance (R) protein that specifically recognizes the avrPphB type III effector avirulence protein from Pseudomonas syringae. Also confers resistance against Hyaloperonospora parasitica (downy mildew). Resistance proteins guard the plant against pathogens that contain an appropriate avirulence protein via an indirect interaction with this avirulence protein. That triggers a defense system including the hypersensitive response, which restricts the pathogen growth. Requires PBS1 to trigger the defense reaction against avrPphB. In case of infection by Pseudomonas syringae, AvrPphB triggers RPS5-mediated defense mechanism via the cleavage of PBS1, suggesting that the cleavage of PBS1 could trigger an exchange of ADP for ATP, thereby activating RPS5. May function as a fine-tuned sensor of alterations in the structure of the effector target PBS1. The chain is Disease resistance protein RPS5 (RPS5) from Arabidopsis thaliana (Mouse-ear cress).